Reading from the N-terminus, the 860-residue chain is uncharacterized protein (860 aa).

Basic and acidic residues-rich tracts occupy residues 334–345 and 536–551; these read LEKKSLQSDSKN and EDQK…LSDK. Disordered regions lie at residues 334–360, 530–551, 708–798, and 813–842; these read LEKK…LRKE, EEDD…LSDK, ARKT…EDEF, and PFNE…RKAI. Acidic residues-rich tracts occupy residues 716–725, 738–750, and 813–824; these read DEEGEIDEDE, EMDE…DSEE, and PFNETDDEEEIQ. Phosphoserine occurs at positions 744 and 748.

This sequence belongs to the CBF/MAK21 family.

This is an uncharacterized protein from Schizosaccharomyces pombe (strain 972 / ATCC 24843) (Fission yeast).